Here is a 331-residue protein sequence, read N- to C-terminus: NADH-quinone oxidoreductase subunit H (331 aa).

The next 9 helical transmembrane spans lie at 6-26 (FFIV…ATLA), 45-65 (GPWM…IKLF), 78-98 (FIFL…MSVI), 120-140 (IGIL…LIGG), 167-187 (GLSL…DIVH), 193-213 (ITSW…IAAF), 241-261 (MRWG…SIVI), 263-283 (LIFL…MIFL), and 311-331 (CWKI…FVII).

It belongs to the complex I subunit 1 family. NDH-1 is composed of 14 different subunits. Subunits NuoA, H, J, K, L, M, N constitute the membrane sector of the complex.

The protein localises to the cell inner membrane. It carries out the reaction a quinone + NADH + 5 H(+)(in) = a quinol + NAD(+) + 4 H(+)(out). NDH-1 shuttles electrons from NADH, via FMN and iron-sulfur (Fe-S) centers, to quinones in the respiratory chain. The immediate electron acceptor for the enzyme in this species is believed to be ubiquinone. Couples the redox reaction to proton translocation (for every two electrons transferred, four hydrogen ions are translocated across the cytoplasmic membrane), and thus conserves the redox energy in a proton gradient. This subunit may bind ubiquinone. The polypeptide is NADH-quinone oxidoreductase subunit H (Campylobacter hominis (strain ATCC BAA-381 / DSM 21671 / CCUG 45161 / LMG 19568 / NCTC 13146 / CH001A)).